Reading from the N-terminus, the 432-residue chain is Adenylosuccinate synthetase (432 aa).

GTP-binding positions include 12 to 18 and 40 to 42; these read GDEGKGK and GHT. The active-site Proton acceptor is Asp13. Mg(2+)-binding residues include Asp13 and Gly40. Residues 13-16, 38-41, Thr130, Arg144, Gln225, Thr240, and Arg304 contribute to the IMP site; these read DEGK and NAGH. His41 (proton donor) is an active-site residue. Position 300 to 306 (300 to 306) interacts with substrate; the sequence is ATTGRPR. GTP contacts are provided by residues Arg306, 332-334, and 414-416; these read KLD and SVG.

Belongs to the adenylosuccinate synthetase family. As to quaternary structure, homodimer. Requires Mg(2+) as cofactor.

It is found in the cytoplasm. It catalyses the reaction IMP + L-aspartate + GTP = N(6)-(1,2-dicarboxyethyl)-AMP + GDP + phosphate + 2 H(+). It participates in purine metabolism; AMP biosynthesis via de novo pathway; AMP from IMP: step 1/2. Functionally, plays an important role in the de novo pathway of purine nucleotide biosynthesis. Catalyzes the first committed step in the biosynthesis of AMP from IMP. The sequence is that of Adenylosuccinate synthetase from Anaeromyxobacter dehalogenans (strain 2CP-C).